Reading from the N-terminus, the 266-residue chain is Tryptophan synthase alpha chain (266 aa).

Residues Glu46 and Asp57 each act as proton acceptor in the active site.

It belongs to the TrpA family. Tetramer of two alpha and two beta chains.

It catalyses the reaction (1S,2R)-1-C-(indol-3-yl)glycerol 3-phosphate + L-serine = D-glyceraldehyde 3-phosphate + L-tryptophan + H2O. It participates in amino-acid biosynthesis; L-tryptophan biosynthesis; L-tryptophan from chorismate: step 5/5. The alpha subunit is responsible for the aldol cleavage of indoleglycerol phosphate to indole and glyceraldehyde 3-phosphate. The sequence is that of Tryptophan synthase alpha chain from Lacticaseibacillus casei (Lactobacillus casei).